A 517-amino-acid polypeptide reads, in one-letter code: Aldehyde dehydrogenase, mitochondrial (517 aa).

A mitochondrion-targeting transit peptide spans 1 to 17 (MLRAAARFGPRLGRRLL). The SIFI-degron signature appears at 9–24 (GPRLGRRLLSAAATQA). Residues Lys-52, Lys-73, Lys-78, and Lys-159 each carry the N6-acetyllysine modification. Residue 262-267 (GSTEIG) coordinates NAD(+). The active-site Proton acceptor is the Glu-285. The active-site Nucleophile is Cys-319. 5 positions are modified to N6-acetyllysine: Lys-368, Lys-383, Lys-426, Lys-428, and Lys-451.

The protein belongs to the aldehyde dehydrogenase family. As to quaternary structure, homotetramer. In terms of processing, in response to mitochondrial stress, the precursor protein is ubiquitinated by the SIFI complex in the cytoplasm before mitochondrial import, leading to its degradation. Within the SIFI complex, UBR4 initiates ubiquitin chain that are further elongated or branched by KCMF1.

It localises to the mitochondrion matrix. The catalysed reaction is an aldehyde + NAD(+) + H2O = a carboxylate + NADH + 2 H(+). Its pathway is alcohol metabolism; ethanol degradation; acetate from ethanol: step 2/2. Functionally, required for clearance of cellular formaldehyde, a cytotoxic and carcinogenic metabolite that induces DNA damage. This chain is Aldehyde dehydrogenase, mitochondrial (ALDH2), found in Homo sapiens (Human).